The chain runs to 203 residues: ATP-dependent Clp protease proteolytic subunit (203 aa).

Ser107 functions as the Nucleophile in the catalytic mechanism. The active site involves His132.

Belongs to the peptidase S14 family. As to quaternary structure, fourteen ClpP subunits assemble into 2 heptameric rings which stack back to back to give a disk-like structure with a central cavity, resembling the structure of eukaryotic proteasomes.

It localises to the cytoplasm. It carries out the reaction Hydrolysis of proteins to small peptides in the presence of ATP and magnesium. alpha-casein is the usual test substrate. In the absence of ATP, only oligopeptides shorter than five residues are hydrolyzed (such as succinyl-Leu-Tyr-|-NHMec, and Leu-Tyr-Leu-|-Tyr-Trp, in which cleavage of the -Tyr-|-Leu- and -Tyr-|-Trp bonds also occurs).. Functionally, cleaves peptides in various proteins in a process that requires ATP hydrolysis. Has a chymotrypsin-like activity. Plays a major role in the degradation of misfolded proteins. This is ATP-dependent Clp protease proteolytic subunit from Shewanella frigidimarina (strain NCIMB 400).